The chain runs to 92 residues: UPF0213 protein M28_Spy1146 (92 aa).

The GIY-YIG domain maps to 4–80 (KKAYMYVLEC…KRKTRSQKLA (77 aa)).

It belongs to the UPF0213 family.

This chain is UPF0213 protein M28_Spy1146, found in Streptococcus pyogenes serotype M28 (strain MGAS6180).